Consider the following 443-residue polypeptide: Thymidine phosphorylase (443 aa).

This sequence belongs to the thymidine/pyrimidine-nucleoside phosphorylase family. As to quaternary structure, homodimer.

It catalyses the reaction thymidine + phosphate = 2-deoxy-alpha-D-ribose 1-phosphate + thymine. Its pathway is pyrimidine metabolism; dTMP biosynthesis via salvage pathway; dTMP from thymine: step 1/2. In terms of biological role, the enzymes which catalyze the reversible phosphorolysis of pyrimidine nucleosides are involved in the degradation of these compounds and in their utilization as carbon and energy sources, or in the rescue of pyrimidine bases for nucleotide synthesis. The sequence is that of Thymidine phosphorylase from Shewanella baltica (strain OS223).